We begin with the raw amino-acid sequence, 255 residues long: Putative transcription factor D5 (255 aa).

Its function is as follows. Putative transcription factor required for the expression of viral late genes. This Escherichia coli (Enterobacteria phage T5) protein is Putative transcription factor D5.